The following is a 538-amino-acid chain: Sensor protein CitS (538 aa).

Topologically, residues 1–13 (MKRRLFPLTFSAK) are cytoplasmic. A helical transmembrane segment spans residues 14 to 34 (MMGFIALLIIAMFVLLGVFLN). Over 35 to 174 (EQYARTLEEQ…DIQQVIGERL (140 aa)) the chain is Extracellular. A helical transmembrane segment spans residues 175–195 (IAMWQIVVVIMILGLMGTWLV). The Cytoplasmic portion of the chain corresponds to 196-538 (ANTVKKATLG…TIPKHEAKEG (343 aa)). The 67-residue stretch at 216-282 (QQKEAILQSI…PEVLQVGKGQ (67 aa)) folds into the PAS domain. Residues 339–534 (AQTHEFSNKL…CFVLTIPKHE (196 aa)) form the Histidine kinase domain. His-342 is modified (phosphohistidine; by autocatalysis).

Its subcellular location is the cell membrane. The catalysed reaction is ATP + protein L-histidine = ADP + protein N-phospho-L-histidine.. Member of the two-component regulatory system CitT/CitS. Functions probably as a membrane-associated protein kinase that phosphorylates CitT in response to environmental citrate or Mg(2+)-citrate complex. The protein is Sensor protein CitS (citS) of Halalkalibacterium halodurans (strain ATCC BAA-125 / DSM 18197 / FERM 7344 / JCM 9153 / C-125) (Bacillus halodurans).